The chain runs to 578 residues: Zinc finger protein 248 (578 aa).

Residues 8-78 (VSFKDVCVDF…LEKGFPSQDP (71 aa)) form the KRAB domain. A C2H2-type 1; degenerate zinc finger spans residues 239–263 (TVCKYNECGRTFIESLKLNISQRPH). A Glycyl lysine isopeptide (Lys-Gly) (interchain with G-Cter in SUMO2) cross-link involves residue K340. 7 consecutive C2H2-type zinc fingers follow at residues 379–401 (FECG…QRTH), 407–429 (YECT…QRTH), 435–457 (YECK…QRTH), 463–485 (YECN…QRTH), 491–513 (FICN…QRTH), 519–542 (YKCN…RTHT), and 547–569 (YECN…QRIH).

Belongs to the krueppel C2H2-type zinc-finger protein family.

The protein resides in the nucleus. Functionally, may be involved in transcriptional regulation. This Pongo abelii (Sumatran orangutan) protein is Zinc finger protein 248 (ZNF248).